A 604-amino-acid chain; its full sequence is Hemagglutinin glycoprotein (604 aa).

Over 1–37 (MLPYQDKVGAFYKDNARANSTKLSLVTEGHGGRRPPY) the chain is Intravirion. A helical membrane pass occupies residues 38 to 58 (LLFVLLILLVGILALLAITGV). Residues 59–604 (RFHQVSTSNM…LVRIRFSCNR (546 aa)) lie on the Virion surface side of the membrane. Residues N149, N422, and N587 are each glycosylated (N-linked (GlcNAc...) asparagine; by host).

It belongs to the paramyxoviruses hemagglutinin-neuraminidase family. Non-sialidase subfamily. Binds canine SLAMF1 at the cell surface.

It localises to the virion membrane. The protein resides in the host cell membrane. Attaches the virus to cell receptors and thereby initiating infection. Binding of H protein to the receptor induces a conformational change that allows the F protein to trigger virion/cell membranes fusion. The cellular receptor might be SLAM, and may explain the lymphotropism of the virus. The chain is Hemagglutinin glycoprotein (H) from Ailuropoda melanoleuca (Giant panda).